A 1158-amino-acid chain; its full sequence is ATP-dependent helicase/deoxyribonuclease subunit B (1158 aa).

It belongs to the helicase family. AddB/RexB type 2 subfamily. As to quaternary structure, heterodimer of AddA and RexB. It depends on Mg(2+) as a cofactor.

The heterodimer acts as both an ATP-dependent DNA helicase and an ATP-dependent, dual-direction single-stranded exonuclease. Recognizes the chi site generating a DNA molecule suitable for the initiation of homologous recombination. This subunit has 5' -&gt; 3' nuclease activity but not helicase activity. This Lactobacillus gasseri (strain ATCC 33323 / DSM 20243 / BCRC 14619 / CIP 102991 / JCM 1131 / KCTC 3163 / NCIMB 11718 / NCTC 13722 / AM63) protein is ATP-dependent helicase/deoxyribonuclease subunit B.